The following is a 195-amino-acid chain: Probable cobalt-precorrin-6B C(15)-methyltransferase (decarboxylating) (195 aa).

S-adenosyl-L-methionine-binding positions include Thr-24, 48–52 (GCGTG), Asp-72, and Ala-101.

This sequence belongs to the methyltransferase superfamily. Archaeal-type CbiT family.

It carries out the reaction Co-precorrin-6B + S-adenosyl-L-methionine = Co-precorrin-7 + S-adenosyl-L-homocysteine + CO2. It functions in the pathway cofactor biosynthesis; adenosylcobalamin biosynthesis; cob(II)yrinate a,c-diamide from sirohydrochlorin (anaerobic route): step 8/10. Its function is as follows. Catalyzes the methylation of C-15 in cobalt-precorrin-6B followed by the decarboxylation of C-12 to form cobalt-precorrin-7. In Pyrobaculum calidifontis (strain DSM 21063 / JCM 11548 / VA1), this protein is Probable cobalt-precorrin-6B C(15)-methyltransferase (decarboxylating).